We begin with the raw amino-acid sequence, 249 residues long: Triosephosphate isomerase (249 aa).

9–11 (NWK) is a substrate binding site. H94 serves as the catalytic Electrophile. The Proton acceptor role is filled by E166. Substrate contacts are provided by residues G172, S212, and 233–234 (GG).

Belongs to the triosephosphate isomerase family. As to quaternary structure, homodimer.

It is found in the cytoplasm. The enzyme catalyses D-glyceraldehyde 3-phosphate = dihydroxyacetone phosphate. Its pathway is carbohydrate biosynthesis; gluconeogenesis. The protein operates within carbohydrate degradation; glycolysis; D-glyceraldehyde 3-phosphate from glycerone phosphate: step 1/1. In terms of biological role, involved in the gluconeogenesis. Catalyzes stereospecifically the conversion of dihydroxyacetone phosphate (DHAP) to D-glyceraldehyde-3-phosphate (G3P). The sequence is that of Triosephosphate isomerase from Treponema pallidum (strain Nichols).